Consider the following 249-residue polypeptide: 5'-nucleotidase SurE (249 aa).

Residues D8, D9, S39, and N91 each coordinate a divalent metal cation.

It belongs to the SurE nucleotidase family. It depends on a divalent metal cation as a cofactor.

It is found in the cytoplasm. The catalysed reaction is a ribonucleoside 5'-phosphate + H2O = a ribonucleoside + phosphate. Nucleotidase that shows phosphatase activity on nucleoside 5'-monophosphates. This Magnetococcus marinus (strain ATCC BAA-1437 / JCM 17883 / MC-1) protein is 5'-nucleotidase SurE.